Reading from the N-terminus, the 80-residue chain is Large ribosomal subunit protein eL13 (80 aa).

The protein belongs to the eukaryotic ribosomal protein eL13 family.

This chain is Large ribosomal subunit protein eL13, found in Aeropyrum pernix (strain ATCC 700893 / DSM 11879 / JCM 9820 / NBRC 100138 / K1).